The primary structure comprises 446 residues: C4-dicarboxylate transport protein (446 aa).

9 helical membrane-spanning segments follow: residues 25–45, 58–78, 93–113, 159–179, 199–219, 236–256, 322–342, 370–390, and 400–420; these read VQVL…PAIG, LVKM…IASI, FAYF…VANV, ALTE…GLAL, VFFG…FGAM, LLIA…LGAV, IYMT…LSLG, AATL…ILGI, and LTNF…EKGL.

Belongs to the dicarboxylate/amino acid:cation symporter (DAACS) (TC 2.A.23) family.

Its subcellular location is the cell inner membrane. Its function is as follows. Responsible for the transport of dicarboxylates such as succinate, fumarate, and malate from the periplasm across the membrane. The sequence is that of C4-dicarboxylate transport protein from Sphingopyxis alaskensis (strain DSM 13593 / LMG 18877 / RB2256) (Sphingomonas alaskensis).